Here is a 580-residue protein sequence, read N- to C-terminus: Transcription factor coe2-B (580 aa).

The interaction with DNA stretch occupies residues 60–63 (RKSN). Residues 148-167 (CRVLLTHEVMCSRCCEKKSC) form a C5-type zinc finger. Interaction with DNA regions lie at residues 194 to 201 (NCLKTAGN) and 233 to 236 (NNSK). The IPT/TIG domain occupies 259 to 341 (PCIKAISPSE…CKGAPGRFIY (83 aa)). The segment at 455 to 492 (IRNTSSISPRGYSSSSTPQQSNYSTPSNSMNGYSNVPM) is disordered. Low complexity predominate over residues 459-481 (SSISPRGYSSSSTPQQSNYSTPS). The span at 482 to 492 (NSMNGYSNVPM) shows a compositional bias: polar residues.

It belongs to the COE family. As to expression, in embryos, expressed in precursors of primary neurons. In adults, expressed at high levels in the brain, and at low levels in the somatic muscles, testis, and possibly the spleen.

Its subcellular location is the nucleus. Its function is as follows. May play a pivotal role in the transcriptional cascade that specifies primary neurons in embryos. Stabilizes the higher neural potential of selected progenitor cells that express neurog2/X-ngnr-1 by maintaining Delta-Notch signaling. Thus ensures the transition between neural competence and irreversible commitment to a neural fate. Also promotes neuronal differentiation by activating neurod1 expression, directly or indirectly. This is Transcription factor coe2-B from Xenopus laevis (African clawed frog).